Reading from the N-terminus, the 307-residue chain is 4-diphosphocytidyl-2-C-methyl-D-erythritol kinase (307 aa).

Residue lysine 9 is part of the active site. 94 to 104 provides a ligand contact to ATP; sequence PIGAGLAGGSS. Aspartate 136 is a catalytic residue.

The protein belongs to the GHMP kinase family. IspE subfamily.

It carries out the reaction 4-CDP-2-C-methyl-D-erythritol + ATP = 4-CDP-2-C-methyl-D-erythritol 2-phosphate + ADP + H(+). Its pathway is isoprenoid biosynthesis; isopentenyl diphosphate biosynthesis via DXP pathway; isopentenyl diphosphate from 1-deoxy-D-xylulose 5-phosphate: step 3/6. Catalyzes the phosphorylation of the position 2 hydroxy group of 4-diphosphocytidyl-2C-methyl-D-erythritol. This Synechococcus sp. (strain CC9605) protein is 4-diphosphocytidyl-2-C-methyl-D-erythritol kinase.